The chain runs to 561 residues: MNINVAELLNGNYILLLFVVLALGLCLGKLRLGSIQLGNSIGVLVVSLLLGQQHFSINTEALNLGFMLFIFCVGVEAGPNFFSIFFRDGKNYLMLALVMVGSALLIALGLGKLFGWDIGLTAGMLAGSMTSTPVLVGAGDTLRHFGISGTELSSALDNLSLGYALTYLIGLVSLIVGARYLPKLQHQDLQTSAQQIARERGLDTDATRKVYLPVIRAYRVGPELVAWTDGKNLRELGIYRQTGCYIERIRRNGILANPDGDAVLQMGDEIALVGYPDAHARLDPSFRNGKEVFDRDLLDMRIVTEEVVVKNHNAVGKRLAQLKLTDHGCFLNRVIRSQIEMPIDDNVVLNKGDVLQVSGDARRVKTIADRIGFISIHSQVTDLLAFCAFFIIGLMIGMITFQFSSFSFGMGNAAGLLFAGIMLGFMRANHPTFGYIPQGALSMVKEFGLMVFMAGVGLSAGSGINNGLGAIGGQMLVAGLIVSLVPVVICFLFGAYVLRMNRALLFGAMMGARTCAPAMEIISDTARSNIPALGYAGTYAIANVLLTLAGTIIVMVWPGLG.

Helical transmembrane passes span 8–28 (LLNGNYILLLFVVLALGLCLG), 32–52 (LGSIQLGNSIGVLVVSLLLGQ), 66–86 (FMLFIFCVGVEAGPNFFSIFF), 94–114 (MLALVMVGSALLIALGLGKLF), and 158–178 (NLSLGYALTYLIGLVSLIVGA). RCK C-terminal domains follow at residues 202–288 (LDTD…SFRN) and 292–373 (VFDR…RIGF). 5 consecutive transmembrane segments (helical) span residues 383–403 (LLAFCAFFIIGLMIGMITFQF), 406–426 (FSFGMGNAAGLLFAGIMLGFM), 451–471 (VFMAGVGLSAGSGINNGLGAI), 475–495 (MLVAGLIVSLVPVVICFLFGA), and 540–560 (AIANVLLTLAGTIIVMVWPGL).

The protein belongs to the AAE transporter (TC 2.A.81) family. YbjL subfamily.

It localises to the cell membrane. This chain is Putative transport protein YbjL, found in Escherichia fergusonii (strain ATCC 35469 / DSM 13698 / CCUG 18766 / IAM 14443 / JCM 21226 / LMG 7866 / NBRC 102419 / NCTC 12128 / CDC 0568-73).